A 133-amino-acid polypeptide reads, in one-letter code: ATP synthase epsilon chain (133 aa).

It belongs to the ATPase epsilon chain family. F-type ATPases have 2 components, CF(1) - the catalytic core - and CF(0) - the membrane proton channel. CF(1) has five subunits: alpha(3), beta(3), gamma(1), delta(1), epsilon(1). CF(0) has three main subunits: a, b and c.

Its subcellular location is the cell membrane. Its function is as follows. Produces ATP from ADP in the presence of a proton gradient across the membrane. The sequence is that of ATP synthase epsilon chain (atpC) from Clostridium acetobutylicum (strain ATCC 824 / DSM 792 / JCM 1419 / IAM 19013 / LMG 5710 / NBRC 13948 / NRRL B-527 / VKM B-1787 / 2291 / W).